A 415-amino-acid chain; its full sequence is Adenylosuccinate synthetase (415 aa).

Residues 12-18 and 40-42 contribute to the GTP site; these read GDEGKGK and GHT. The active-site Proton acceptor is D13. Mg(2+) contacts are provided by D13 and G40. Residues 13–16, 38–41, T125, R139, Q219, T234, and R298 each bind IMP; these read DEGK and NAGH. The active-site Proton donor is H41. Residue 294 to 300 participates in substrate binding; sequence TTTGRPR. GTP-binding positions include R300, 326–328, and 404–406; these read KLD and STG.

It belongs to the adenylosuccinate synthetase family. Homodimer. Mg(2+) is required as a cofactor.

The protein resides in the cytoplasm. It catalyses the reaction IMP + L-aspartate + GTP = N(6)-(1,2-dicarboxyethyl)-AMP + GDP + phosphate + 2 H(+). The protein operates within purine metabolism; AMP biosynthesis via de novo pathway; AMP from IMP: step 1/2. In terms of biological role, plays an important role in the de novo pathway of purine nucleotide biosynthesis. Catalyzes the first committed step in the biosynthesis of AMP from IMP. The sequence is that of Adenylosuccinate synthetase from Wolinella succinogenes (strain ATCC 29543 / DSM 1740 / CCUG 13145 / JCM 31913 / LMG 7466 / NCTC 11488 / FDC 602W) (Vibrio succinogenes).